The chain runs to 118 residues: uncharacterized protein (118 aa).

A run of 3 helical transmembrane segments spans residues 6-26 (ILILLVIIITTYFTRIWPFMV), 43-63 (ALSCSVIGMLVVYCFKDIHVL), and 84-104 (IFKVFVLSITLPTILYMVLVQ).

This sequence belongs to the AzlD/HI_1737/HP1330 family.

Its subcellular location is the cell membrane. This is an uncharacterized protein from Helicobacter pylori (strain J99 / ATCC 700824) (Campylobacter pylori J99).